A 431-amino-acid chain; its full sequence is Islet cell autoantigen 1-like protein (431 aa).

An AH domain is found at 44–247 (ASDAELDAKL…TAQMMTQIQE (204 aa)). 2 disordered regions span residues 295–316 (EEEEEERFEREPAVARALPRDS) and 351–372 (CGSPCTGLTSQEPSVGPGSLTS). The span at 301–316 (RFEREPAVARALPRDS) shows a compositional bias: basic and acidic residues. Over residues 356 to 372 (TGLTSQEPSVGPGSLTS) the composition is skewed to polar residues.

This is Islet cell autoantigen 1-like protein (Ica1l) from Mus musculus (Mouse).